The sequence spans 142 residues: MEGGGGGLGGEPGLLQQILSLRLVPRVGNVTDCQRATLCSFPEMWYGVFLWALVSSLFFHIPAGLLALFTLRHHKYGRFMSVGIFLMGVLGPISAGILTSAAIAGVYKAAGKEMIPFEALVLGVGQTFCVLIVSFLRILATL.

Topologically, residues 1–48 (MEGGGGGLGGEPGLLQQILSLRLVPRVGNVTDCQRATLCSFPEMWYGV) are lumenal. N-linked (GlcNAc...) asparagine glycosylation is present at asparagine 29. The chain crosses the membrane as a helical span at residues 49–69 (FLWALVSSLFFHIPAGLLALF). Residues 70–78 (TLRHHKYGR) are Cytoplasmic-facing. A helical membrane pass occupies residues 79–99 (FMSVGIFLMGVLGPISAGILT). Residues 100–114 (SAAIAGVYKAAGKEM) are Lumenal-facing. The chain crosses the membrane as a helical span at residues 115 to 135 (IPFEALVLGVGQTFCVLIVSF). Residues 136–142 (LRILATL) are Cytoplasmic-facing.

The protein belongs to the TMEM170 family.

The protein resides in the endoplasmic reticulum membrane. It is found in the nucleus envelope. Functionally, may regulate membrane morphogenesis in the endoplasmic reticulum (ER) by promoting ER sheet formation at the expense of ER tubules. This Xenopus laevis (African clawed frog) protein is Transmembrane protein 170A (tmem170a).